The primary structure comprises 418 residues: Light-independent protochlorophyllide reductase subunit N (418 aa).

C17, C42, and C103 together coordinate [4Fe-4S] cluster.

The protein belongs to the BchN/ChlN family. In terms of assembly, protochlorophyllide reductase is composed of three subunits; ChlL, ChlN and ChlB. Forms a heterotetramer of two ChlB and two ChlN subunits. [4Fe-4S] cluster serves as cofactor.

The catalysed reaction is chlorophyllide a + oxidized 2[4Fe-4S]-[ferredoxin] + 2 ADP + 2 phosphate = protochlorophyllide a + reduced 2[4Fe-4S]-[ferredoxin] + 2 ATP + 2 H2O. It functions in the pathway porphyrin-containing compound metabolism; chlorophyll biosynthesis (light-independent). In terms of biological role, component of the dark-operative protochlorophyllide reductase (DPOR) that uses Mg-ATP and reduced ferredoxin to reduce ring D of protochlorophyllide (Pchlide) to form chlorophyllide a (Chlide). This reaction is light-independent. The NB-protein (ChlN-ChlB) is the catalytic component of the complex. The sequence is that of Light-independent protochlorophyllide reductase subunit N from Prochlorococcus marinus (strain MIT 9313).